Reading from the N-terminus, the 309-residue chain is DnaJ-like protein MG002 homolog (309 aa).

The 66-residue stretch at 1–66 (MTLYDLLELP…KAEYDAMLRF (66 aa)) folds into the J domain.

This is DnaJ-like protein MG002 homolog from Mycoplasma pneumoniae (strain ATCC 29342 / M129 / Subtype 1) (Mycoplasmoides pneumoniae).